The primary structure comprises 292 residues: tRNA (adenine(9)-N1)-methyltransferase (292 aa).

The region spanning 72 to 253 (TFRKGGKKVS…ISLQSKSDKI (182 aa)) is the SAM-dependent MTase TRM10-type domain.

Belongs to the class IV-like SAM-binding methyltransferase superfamily. TRM10 family.

Its subcellular location is the cytoplasm. It carries out the reaction adenosine(9) in tRNA + S-adenosyl-L-methionine = N(1)-methyladenosine(9) in tRNA + S-adenosyl-L-homocysteine + H(+). Its function is as follows. Catalyzes the S-adenosyl-L-methionine-dependent formation of N(1)-methyladenine at position 9 (m1A9) in tRNA. This Sulfolobus acidocaldarius (strain ATCC 33909 / DSM 639 / JCM 8929 / NBRC 15157 / NCIMB 11770) protein is tRNA (adenine(9)-N1)-methyltransferase.